The chain runs to 439 residues: Actin-related protein 3 (439 aa).

The disordered stretch occupies residues 40–71; that stretch reads PSAGTGGSGSGRPAVANKPSFLTGGAGPGGHL.

The protein belongs to the actin family. ARP3 subfamily. As to quaternary structure, component of the Arp2/3 complex composed.

The protein resides in the cytoplasm. Its subcellular location is the cytoskeleton. Functionally, functions as ATP-binding component of the Arp2/3 complex which is involved in regulation of actin polymerization and together with an activating nucleation-promoting factor (NPF) mediates the formation of branched actin networks. Seems to contact the pointed end of the daughter actin filament. This chain is Actin-related protein 3 (arp-3), found in Neurospora crassa (strain ATCC 24698 / 74-OR23-1A / CBS 708.71 / DSM 1257 / FGSC 987).